A 358-amino-acid polypeptide reads, in one-letter code: Trace amine-associated receptor 7f (358 aa).

The Extracellular portion of the chain corresponds to 1–47; sequence MSIADETVSWNQDSILSRDLFSATSAELCYENLNRSCVRSPYSPGPR. A glycan (N-linked (GlcNAc...) asparagine) is linked at N34. 2 disulfide bridges follow: C37/C201 and C120/C205. A helical membrane pass occupies residues 48–68; that stretch reads LILYAVFGFGAVLAVCGNLLV. The Cytoplasmic portion of the chain corresponds to 69–83; the sequence is MTSILHFRQLHSPAN. Residues 84-104 form a helical membrane-spanning segment; that stretch reads FLVASLACADFLVGVMVMPFS. Residues 105 to 121 lie on the Extracellular side of the membrane; sequence MVRSVEGCWYFGDSYCK. A helical membrane pass occupies residues 122–143; it reads LHTCFDVSFCYCSLFHLCFISV. Topologically, residues 144-166 are cytoplasmic; it reads DRYIAVSDPLAYPTRFTASVSGK. The helical transmembrane segment at 167–187 threads the bilayer; it reads CITFSWLLSISYGFSLIYTGA. The Extracellular portion of the chain corresponds to 188 to 212; it reads SEAGLEDLVSSLTCVGGCQIAVNQT. The N-linked (GlcNAc...) asparagine glycan is linked to N210. A helical transmembrane segment spans residues 213–233; that stretch reads WVFINFSVFLIPTLVMITVYS. Over 234 to 274 the chain is Cytoplasmic; it reads KIFLIAKQQAQNIEKMSKQTARASDSYKDRVAKRERKAAKT. Residues 275–295 form a helical membrane-spanning segment; sequence LGIAVAAFLLSWLPYFIDSFI. Residues 296–309 are Extracellular-facing; sequence DAFLGFITPTYVYE. Residues 310–333 traverse the membrane as a helical segment; it reads ILVWIVYYNSAMNPLIYAFFYPWF. Topologically, residues 334 to 358 are cytoplasmic; the sequence is RKAIKLTVTGKILRENSSTTNLFSE.

The protein belongs to the G-protein coupled receptor 1 family. In terms of tissue distribution, specifically expressed in neurons of the olfactory epithelium.

The protein resides in the cell membrane. Functionally, olfactory receptor activated by trace amines, such as N-methylpiperidine and N,N-dimethylcyclohexylamine. Trace amine compounds are enriched in animal body fluids and act on trace amine-associated receptors (TAARs) to elicit both intraspecific and interspecific innate behaviors. Ligand-binding causes a conformation change that triggers signaling via G(s)-class of G alpha proteins (GNAL or GNAS). In Mus musculus (Mouse), this protein is Trace amine-associated receptor 7f.